Reading from the N-terminus, the 177-residue chain is Large ribosomal subunit protein uL6 (177 aa).

The protein belongs to the universal ribosomal protein uL6 family. As to quaternary structure, part of the 50S ribosomal subunit.

This protein binds to the 23S rRNA, and is important in its secondary structure. It is located near the subunit interface in the base of the L7/L12 stalk, and near the tRNA binding site of the peptidyltransferase center. The sequence is that of Large ribosomal subunit protein uL6 from Allorhizobium ampelinum (strain ATCC BAA-846 / DSM 112012 / S4) (Agrobacterium vitis (strain S4)).